Consider the following 338-residue polypeptide: DNA-directed RNA polymerase subunit alpha (338 aa).

Positions 1 to 233 (MLREEVAVST…DLFIPFLHAE (233 aa)) are alpha N-terminal domain (alpha-NTD). An alpha C-terminal domain (alpha-CTD) region spans residues 266-338 (IALKFIFIDQ…IDLPKNKFSN (73 aa)).

Belongs to the RNA polymerase alpha chain family. As to quaternary structure, in plastids the minimal PEP RNA polymerase catalytic core is composed of four subunits: alpha, beta, beta', and beta''. When a (nuclear-encoded) sigma factor is associated with the core the holoenzyme is formed, which can initiate transcription.

It is found in the plastid. It localises to the chloroplast. It carries out the reaction RNA(n) + a ribonucleoside 5'-triphosphate = RNA(n+1) + diphosphate. In terms of biological role, DNA-dependent RNA polymerase catalyzes the transcription of DNA into RNA using the four ribonucleoside triphosphates as substrates. This is DNA-directed RNA polymerase subunit alpha from Nandina domestica (Heavenly bamboo).